A 382-amino-acid polypeptide reads, in one-letter code: Serine protease 23 (382 aa).

An N-terminal signal peptide occupies residues 1-22; that stretch reads MAGIPGLFILLVLLCVFMQVSP. N-linked (GlcNAc...) asparagine glycosylation occurs at asparagine 92. A disulfide bond links cysteine 159 and cysteine 175. Histidine 174 serves as the catalytic Charge relay system. Residue asparagine 206 is glycosylated (N-linked (GlcNAc...) asparagine). Active-site charge relay system residues include aspartate 239 and serine 315.

Belongs to the peptidase S1 family.

It localises to the secreted. This Mus musculus (Mouse) protein is Serine protease 23 (Prss23).